The primary structure comprises 342 residues: Oxygen-dependent coproporphyrinogen-III oxidase (342 aa).

Ser107 lines the substrate pocket. Positions 111 and 121 each coordinate a divalent metal cation. Catalysis depends on His121, which acts as the Proton donor. 123–125 serves as a coordination point for substrate; it reads NYR. A divalent metal cation is bound by residues His155 and His185. The segment at 277 to 312 is important for dimerization; it reads YVEFNLVYDRGTIFGLQTNGRTESILMSLPPLVRWE.

Belongs to the aerobic coproporphyrinogen-III oxidase family. Homodimer. A divalent metal cation serves as cofactor.

The protein localises to the cytoplasm. It carries out the reaction coproporphyrinogen III + O2 + 2 H(+) = protoporphyrinogen IX + 2 CO2 + 2 H2O. Its pathway is porphyrin-containing compound metabolism; protoporphyrin-IX biosynthesis; protoporphyrinogen-IX from coproporphyrinogen-III (O2 route): step 1/1. Its function is as follows. Involved in the heme and chlorophyll biosynthesis. Catalyzes the aerobic oxidative decarboxylation of propionate groups of rings A and B of coproporphyrinogen-III to yield the vinyl groups in protoporphyrinogen-IX. This chain is Oxygen-dependent coproporphyrinogen-III oxidase, found in Synechococcus sp. (strain ATCC 27144 / PCC 6301 / SAUG 1402/1) (Anacystis nidulans).